A 624-amino-acid polypeptide reads, in one-letter code: Polycystin-2-like protein 2 (624 aa).

Residues 1–31 are Cytoplasmic-facing; sequence MAEASRWHRGGASKHKLHYRKEVEITTTLQE. The chain crosses the membrane as a helical span at residues 32-52; it reads LLLYFIFLINLCILTFGMVNP. Residues 53–276 lie on the Extracellular side of the membrane; that stretch reads HMYYLNKVMS…YSVKLLRYVS (224 aa). 2 N-linked (GlcNAc...) asparagine glycosylation sites follow: Asn-115 and Asn-138. The chain crosses the membrane as a helical span at residues 277-297; sequence YYDYFIASCEITFCIFLFVFT. Topologically, residues 298 to 314 are cytoplasmic; it reads TQEVKKIKEFKSAYFKS. The helical transmembrane segment at 315-335 threads the bilayer; the sequence is IWNWLELLLLLLCFVAVSFNT. At 336-360 the chain is on the extracellular side; sequence YYNVQIFLLLGQLLKSTEKYSDFYF. The helical transmembrane segment at 361–381 threads the bilayer; that stretch reads LACWHIYYNNIIAITIFFAWI. The Cytoplasmic segment spans residues 382–406; that stretch reads KIFKFISFNKTMSQLSSTLSRCVKD. The chain crosses the membrane as a helical span at residues 407–427; that stretch reads IVGFAIMFFIIFFAYAQLGFL. At 428–469 the chain is on the extracellular side; the sequence is VFGSQVDDFSTFQNSIFAQFRIVLGDFNFAGIQQANPILGPI. The chain crosses the membrane as a helical span at residues 470-490; it reads YFITFIFFVFFVLLNMFLAII. The Cytoplasmic segment spans residues 491 to 624; sequence NDTYSEVKAD…NQVVRKVSAL (134 aa). A coiled-coil region spans residues 556 to 576; sequence ENEIQNAEQMKKWKERLEKKY.

This sequence belongs to the polycystin family. Interacts with TRPC1 and TRPC5. As to expression, expressed only in testis. Expressed also in brain and kidney. Expressed only in transformed lymphoblasts.

The protein localises to the membrane. In terms of biological role, exhibits a lower single conductance but no spontaneous channel activity. May function as a regulator of calcium channels or a channel component involving Ca2(+) homeostasis. This chain is Polycystin-2-like protein 2, found in Homo sapiens (Human).